Consider the following 689-residue polypeptide: DNA ligase (689 aa).

NAD(+) is bound by residues 40–44 (DQEYD), 89–90 (SL), and glutamate 122. The N6-AMP-lysine intermediate role is filled by lysine 124. NAD(+) is bound by residues arginine 145, glutamate 182, lysine 300, and lysine 325. Zn(2+) contacts are provided by cysteine 419, cysteine 422, cysteine 437, and cysteine 442. The BRCT domain maps to 600 to 689 (QADGVLTGAT…SADASADASA (90 aa)).

This sequence belongs to the NAD-dependent DNA ligase family. LigA subfamily. Requires Mg(2+) as cofactor. Mn(2+) is required as a cofactor.

It carries out the reaction NAD(+) + (deoxyribonucleotide)n-3'-hydroxyl + 5'-phospho-(deoxyribonucleotide)m = (deoxyribonucleotide)n+m + AMP + beta-nicotinamide D-nucleotide.. In terms of biological role, DNA ligase that catalyzes the formation of phosphodiester linkages between 5'-phosphoryl and 3'-hydroxyl groups in double-stranded DNA using NAD as a coenzyme and as the energy source for the reaction. It is essential for DNA replication and repair of damaged DNA. The sequence is that of DNA ligase from Gemmatimonas aurantiaca (strain DSM 14586 / JCM 11422 / NBRC 100505 / T-27).